The following is a 535-amino-acid chain: Expansin-like protein 9 (535 aa).

A signal peptide spans 1-25 (MKINKNNYFKIIIFIIYVIINLINA). Asn24 is a glycosylation site (N-linked (GlcNAc...) asparagine). The Extracellular segment spans residues 26-514 (SDNVKLSNCG…DNSSNILLFS (489 aa)). Residues 31–144 (LSNCGQARAE…QEVSCGFLGN (114 aa)) enclose the Expansin-like EG45 domain. Intrachain disulfides connect Cys34/Cys75 and Cys78/Cys139. Asn122, Asn257, and Asn292 each carry an N-linked (GlcNAc...) asparagine glycan. Residues 459-487 (VDGSSNDDDGTGGTGGGASNKVGKRVDGE) are disordered. N-linked (GlcNAc...) asparagine glycosylation occurs at Asn506. The chain crosses the membrane as a helical span at residues 515–535 (FNITLTFLLLSLIINILLLLF).

The protein belongs to the expansin family. Expansin A subfamily.

It is found in the membrane. Its function is as follows. May serve to lubricate the movement of the cellulose microfibrils during cell growth and wall extension and/or may serve to maintain the fluid state of the slug cell wall. This is Expansin-like protein 9 (expl9) from Dictyostelium discoideum (Social amoeba).